We begin with the raw amino-acid sequence, 73 residues long: Copper chaperone ATX1 (73 aa).

Positions 4–68 constitute an HMA domain; that stretch reads IKHYQFNVVM…KIKKTGKEVR (65 aa). Cysteine 15 and cysteine 18 together coordinate Cu(+).

It belongs to the ATX1 family. Homodimer. Interacts with CCC2 via the copper anion.

The protein localises to the cytoplasm. Its activity is regulated as follows. Tetrathiomolybdate directly and reversibly down-regulates copper delivery to secreted metalloenzymes. Copper homeostasis factor that specifically transports copper to the secretory pathway for incorporation into copper enzymes destined for the cell surface or extracellular milieu. Shuttles copper to the transport ATPase CCC2 on a post-Golgi vesicle for eventual targeting to the cell-surface high-affinity iron uptake protein FET3. Protects against oxygen toxicity. In Saccharomyces cerevisiae (strain ATCC 204508 / S288c) (Baker's yeast), this protein is Copper chaperone ATX1.